The sequence spans 383 residues: MGEPYLLTPGPLTTAFSVKDAMLRDWGSWDGDFRGMTAELRRELLAIAGDESGQYDCVPMQGSGSFSVEAMLGSFIPRDGKVLVLMNGAYGQRIAQTLKYLGRAHVSIDKGDYMPPRGSEVAAALDADPAITHVVVVHCETSSGILNPLKEISEAVYSRGRKLLVDSMSAFGAVPAGVGDFRYEAIVSSANKCIEGVPGFGFVIARKSELEAAKDRSHSLSLDVHAQWAYMNKTGQWRFTPPTHVVAAFLEALRLHRKEGGVAGRGARYANNRDVMVAGMRQLGFETLLGDEWLSPIIVTFFSPAHPNFKFERFYELMKARGFIIYPGKLTVVDSFRIGCIGQMDSHVMQKVVAAAAESLAKMRVDTATPPALALAERARLAA.

An N6-(pyridoxal phosphate)lysine modification is found at Lys-192.

The protein belongs to the class-V pyridoxal-phosphate-dependent aminotransferase family. PhnW subfamily. In terms of assembly, homodimer. Pyridoxal 5'-phosphate serves as cofactor.

It catalyses the reaction (2-aminoethyl)phosphonate + pyruvate = phosphonoacetaldehyde + L-alanine. Functionally, involved in phosphonate degradation. This chain is 2-aminoethylphosphonate--pyruvate transaminase, found in Rhizobium meliloti (strain 1021) (Ensifer meliloti).